The primary structure comprises 172 residues: C-phycocyanin subunit beta (172 aa).

The residue at position 72 (asparagine 72) is an N4-methylasparagine. (2R,3E)-phycocyanobilin is bound by residues cysteine 82 and cysteine 153.

The protein belongs to the phycobiliprotein family. As to quaternary structure, heterodimer of an alpha and a beta subunit, which further assembles into trimers and the trimers into hexamers. Post-translationally, contains two covalently linked bilin chromophores. The chromophore on position 82 is added by the phycocyanobilin lyase CpcUS, while the chromophore on position 153 is added by the phycocyanobilin lyase CpcT.

The protein resides in the cellular thylakoid membrane. In terms of biological role, light-harvesting photosynthetic bile pigment-protein from the phycobiliprotein complex (phycobilisome, PBS). Phycocyanin is the major phycobiliprotein in the PBS rod. This chain is C-phycocyanin subunit beta (cpcB), found in Picosynechococcus sp. (strain ATCC 27264 / PCC 7002 / PR-6) (Agmenellum quadruplicatum).